Reading from the N-terminus, the 1147-residue chain is Putative ATP-dependent RNA helicase L377 (1147 aa).

One can recognise a Helicase ATP-binding domain in the interval 108–315; the sequence is INPNTPYRGL…VELINYLRPK (208 aa). 121–128 lines the ATP pocket; it reads WGTGVGKS. Residues 264 to 267 carry the DEAH box motif; that stretch reads DEAH.

The protein belongs to the DEAD box helicase family. DEAH subfamily.

Its subcellular location is the virion. The enzyme catalyses ATP + H2O = ADP + phosphate + H(+). The sequence is that of Putative ATP-dependent RNA helicase L377 from Acanthamoeba polyphaga (Amoeba).